The primary structure comprises 1402 residues: Nuclear pore complex protein Nup160 (1402 aa).

Residues serine 10, serine 456, serine 915, and serine 1123 each carry the phosphoserine modification.

Part of the nuclear pore complex (NPC). Forms part of the NUP160 subcomplex in the nuclear pore which is composed of NUP160, NUP133, NUP107 and NUP96. This complex plays a role in RNA export and in tethering NUP98 and NUP153 to the nucleus.

It localises to the nucleus. It is found in the nuclear pore complex. In terms of biological role, functions as a component of the nuclear pore complex (NPC). Involved in poly(A)+ RNA transport. This is Nuclear pore complex protein Nup160 (Nup160) from Mus musculus (Mouse).